Reading from the N-terminus, the 101-residue chain is Small ribosomal subunit protein uS14 (101 aa).

The protein belongs to the universal ribosomal protein uS14 family. Part of the 30S ribosomal subunit. Contacts proteins S3 and S10.

In terms of biological role, binds 16S rRNA, required for the assembly of 30S particles and may also be responsible for determining the conformation of the 16S rRNA at the A site. This Rhizobium meliloti (strain 1021) (Ensifer meliloti) protein is Small ribosomal subunit protein uS14.